Consider the following 299-residue polypeptide: Very long chain fatty acid elongase 5 (299 aa).

Met-1 bears the N-acetylmethionine mark. 7 helical membrane-spanning segments follow: residues Trp-26 to Val-46, Ile-64 to Val-84, Val-112 to Leu-132, Ile-139 to Met-158, Phe-168 to Ser-187, Gly-205 to Cys-225, and Phe-227 to Thr-247.

This sequence belongs to the ELO family. ELOVL5 subfamily. Interacts with TECR. In terms of tissue distribution, highly expressed in lung and brain.

It is found in the endoplasmic reticulum membrane. It localises to the cell projection. The protein localises to the dendrite. It carries out the reaction a very-long-chain acyl-CoA + malonyl-CoA + H(+) = a very-long-chain 3-oxoacyl-CoA + CO2 + CoA. It catalyses the reaction (6Z,9Z,12Z,15Z)-octadecatetraenoyl-CoA + malonyl-CoA + H(+) = (8Z,11Z,14Z,17Z)-3-oxoicosatetraenoyl-CoA + CO2 + CoA. The catalysed reaction is (6Z,9Z,12Z)-octadecatrienoyl-CoA + malonyl-CoA + H(+) = (8Z,11Z,14Z)-3-oxoeicosatrienoyl-CoA + CO2 + CoA. The enzyme catalyses (5Z,8Z,11Z,14Z,17Z)-eicosapentaenoyl-CoA + malonyl-CoA + H(+) = 3-oxo-(7Z,10Z,13Z,16Z,19Z)-docosapentaenoyl-CoA + CO2 + CoA. It carries out the reaction (5Z,8Z,11Z,14Z)-eicosatetraenoyl-CoA + malonyl-CoA + H(+) = (7Z,10Z,13Z,16Z)-3-oxodocosatetraenoyl-CoA + CO2 + CoA. It catalyses the reaction (9Z,12Z,15Z)-octadecatrienoyl-CoA + malonyl-CoA + H(+) = (11Z,14Z,17Z)-3-oxoeicosatrienoyl-CoA + CO2 + CoA. The catalysed reaction is (9Z)-hexadecenoyl-CoA + malonyl-CoA + H(+) = 3-oxo-(11Z)-octadecenoyl-CoA + CO2 + CoA. The enzyme catalyses (9Z)-octadecenoyl-CoA + malonyl-CoA + H(+) = 3-oxo-(11Z)-eicosenoyl-CoA + CO2 + CoA. It carries out the reaction (11Z)-octadecenoyl-CoA + malonyl-CoA + H(+) = 3-oxo-(13Z)-eicosenoyl-CoA + CO2 + CoA. It catalyses the reaction (9Z,12Z)-octadecadienoyl-CoA + malonyl-CoA + H(+) = (11Z,14Z)-3-oxoicosa-11,14-dienoyl-CoA + CO2 + CoA. The protein operates within lipid metabolism; polyunsaturated fatty acid biosynthesis. Functionally, catalyzes the first and rate-limiting reaction of the four reactions that constitute the long-chain fatty acids elongation cycle. This endoplasmic reticulum-bound enzymatic process allows the addition of 2 carbons to the chain of long- and very long-chain fatty acids (VLCFAs) per cycle. Condensing enzyme that acts specifically toward polyunsaturated acyl-CoA with the higher activity toward C18:3(n-6) acyl-CoA. May participate in the production of monounsaturated and of polyunsaturated VLCFAs of different chain lengths that are involved in multiple biological processes as precursors of membrane lipids and lipid mediators. In conditions where the essential linoleic and alpha linoleic fatty acids are lacking it is also involved in the synthesis of Mead acid from oleic acid. The protein is Very long chain fatty acid elongase 5 of Rattus norvegicus (Rat).